An 811-amino-acid chain; its full sequence is DEAD-box ATP-dependent RNA helicase 48 (811 aa).

Disordered stretches follow at residues 1-32 (MGGG…ERGL) and 93-138 (DDGP…EPRL). Basic residues predominate over residues 15–29 (WQHKRMHEKLARHKE). Composition is skewed to basic and acidic residues over residues 95 to 104 (GPIHRADRPR) and 117 to 138 (GDRR…EPRL). Residues 286-333 (RNCDMKKERRALKSYEEENNDLAGSFRELREEIKNREVLGAERRRYES) are a coiled coil. The short motif at 342–370 (KRFEECGISPLTVKALTDAGYVQTTVVQE) is the Q motif element. A Helicase ATP-binding domain is found at 373–556 (LPMCLEGKDV…QLVLKRDHVF (184 aa)). ATP is bound at residue 386–393 (AKTGTGKS). A DEAD box motif is present at residues 504 to 507 (DEAD). The Helicase C-terminal domain occupies 570–740 (KVEQLYLVMP…EMKRKVDGSI (171 aa)).

The protein belongs to the DEAD box helicase family.

The catalysed reaction is ATP + H2O = ADP + phosphate + H(+). The sequence is that of DEAD-box ATP-dependent RNA helicase 48 from Oryza sativa subsp. japonica (Rice).